A 284-amino-acid chain; its full sequence is Isopentenyl-diphosphate delta-isomerase (284 aa).

K77 serves as a coordination point for substrate. 2 residues coordinate Mg(2+): H81 and H92. Positions L90 to L256 constitute a Nudix hydrolase domain. The substrate site is built by R111 and K115. C127 is an active-site residue. S128 is a substrate binding site. The Nudix box motif lies at S128 to G172. Residues E204 and E206 each coordinate Mg(2+). Residue E206 is part of the active site.

This sequence belongs to the IPP isomerase type 1 family. Requires Mg(2+) as cofactor.

It localises to the cytoplasm. The enzyme catalyses isopentenyl diphosphate = dimethylallyl diphosphate. Its pathway is isoprenoid biosynthesis; dimethylallyl diphosphate biosynthesis; dimethylallyl diphosphate from isopentenyl diphosphate: step 1/1. Isopentenyl-diphosphate delta-isomerase; part of the second module of ergosterol biosynthesis pathway that includes the middle steps of the pathway. IDI1 catalyzes the 1,3-allylic rearrangement of isopentenyl (IPP) to its highly electrophilic allylic isomer, dimethylallyl diphosphate (DMAPP). The second module is carried out in the vacuole and involves the formation of farnesyl diphosphate, which is also an important intermediate in the biosynthesis of ubiquinone, dolichol, heme and prenylated proteins. Activity by the mevalonate kinase ERG12 first converts mevalonate into 5-phosphomevalonate. 5-phosphomevalonate is then further converted to 5-diphosphomevalonate by the phosphomevalonate kinase ERG8. The diphosphomevalonate decarboxylase MVD then produces isopentenyl diphosphate. The isopentenyl-diphosphate delta-isomerase IDI1 then catalyzes the 1,3-allylic rearrangement of the homoallylic substrate isopentenyl (IPP) to its highly electrophilic allylic isomer, dimethylallyl diphosphate (DMAPP). Finally the farnesyl diphosphate synthase ERG20 catalyzes the sequential condensation of isopentenyl pyrophosphate with dimethylallyl pyrophosphate, and then with the resultant geranylpyrophosphate to the ultimate product farnesyl pyrophosphate. In Candida albicans (strain SC5314 / ATCC MYA-2876) (Yeast), this protein is Isopentenyl-diphosphate delta-isomerase.